A 409-amino-acid polypeptide reads, in one-letter code: Glutamyl-tRNA reductase (409 aa).

Residues 48–51 (TCNR), S89, 94–96 (ENE), and Q100 each bind substrate. Catalysis depends on C49, which acts as the Nucleophile. Residue 165-170 (GNGMLA) participates in NADP(+) binding.

This sequence belongs to the glutamyl-tRNA reductase family. In terms of assembly, homodimer.

It catalyses the reaction (S)-4-amino-5-oxopentanoate + tRNA(Glu) + NADP(+) = L-glutamyl-tRNA(Glu) + NADPH + H(+). The protein operates within porphyrin-containing compound metabolism; protoporphyrin-IX biosynthesis; 5-aminolevulinate from L-glutamyl-tRNA(Glu): step 1/2. Catalyzes the NADPH-dependent reduction of glutamyl-tRNA(Glu) to glutamate 1-semialdehyde (GSA). The sequence is that of Glutamyl-tRNA reductase from Thermoplasma volcanium (strain ATCC 51530 / DSM 4299 / JCM 9571 / NBRC 15438 / GSS1).